The chain runs to 376 residues: Chaperone protein DnaJ (376 aa).

In terms of domain architecture, J spans 5 to 69; the sequence is DYYEILGVDR…EKRARYDRFG (65 aa). A CR-type zinc finger spans residues 135–217; that stretch reads GLETDIRVPH…CNGKGVVRKT (83 aa). Positions 148, 151, 165, 168, 191, 194, 205, and 208 each coordinate Zn(2+). 4 CXXCXGXG motif repeats span residues 148–155, 165–172, 191–198, and 205–212; these read CPVCHGSR, CQTCGGSG, CPDCQGEG, and CSNCNGKG.

This sequence belongs to the DnaJ family. As to quaternary structure, homodimer. The cofactor is Zn(2+).

Its subcellular location is the cytoplasm. Its function is as follows. Participates actively in the response to hyperosmotic and heat shock by preventing the aggregation of stress-denatured proteins and by disaggregating proteins, also in an autonomous, DnaK-independent fashion. Unfolded proteins bind initially to DnaJ; upon interaction with the DnaJ-bound protein, DnaK hydrolyzes its bound ATP, resulting in the formation of a stable complex. GrpE releases ADP from DnaK; ATP binding to DnaK triggers the release of the substrate protein, thus completing the reaction cycle. Several rounds of ATP-dependent interactions between DnaJ, DnaK and GrpE are required for fully efficient folding. Also involved, together with DnaK and GrpE, in the DNA replication of plasmids through activation of initiation proteins. This Methanothermobacter thermautotrophicus (strain ATCC 29096 / DSM 1053 / JCM 10044 / NBRC 100330 / Delta H) (Methanobacterium thermoautotrophicum) protein is Chaperone protein DnaJ.